The following is a 169-amino-acid chain: Protein-export protein SecB (169 aa).

Belongs to the SecB family. In terms of assembly, homotetramer, a dimer of dimers. One homotetramer interacts with 1 SecA dimer.

The protein localises to the cytoplasm. In terms of biological role, one of the proteins required for the normal export of preproteins out of the cell cytoplasm. It is a molecular chaperone that binds to a subset of precursor proteins, maintaining them in a translocation-competent state. It also specifically binds to its receptor SecA. The sequence is that of Protein-export protein SecB from Haemophilus influenzae (strain PittEE).